Consider the following 413-residue polypeptide: Snake venom metalloproteinase AaPA (413 aa).

Residues 1-20 form the signal peptide; sequence MIQVLLVTICLAAFPYQGSS. The propeptide occupies 21 to 189; it reads IILESGKVND…KKASQLIVST (169 aa). The region spanning 193–390 is the Peptidase M12B domain; it reads RYMEIVIVVD…ENPPCILNKP (198 aa). Ca(2+) is bound by residues Glu-196 and Asp-280. Intrachain disulfides connect Cys-304/Cys-385, Cys-344/Cys-369, and Cys-346/Cys-352. Zn(2+) is bound at residue His-329. Residue Glu-330 is part of the active site. Zn(2+) contacts are provided by His-333 and His-339. Residues Cys-385, Asn-388, Val-400, Asn-403, Leu-405, Glu-407, and Asp-413 each coordinate Ca(2+). Residues 391-413 constitute a propeptide that is removed on maturation; the sequence is LRTDTVSTPVSGNELLEAEKDYD.

Belongs to the venom metalloproteinase (M12B) family. P-I subfamily. Monomer. Zn(2+) is required as a cofactor. In terms of tissue distribution, expressed by the venom gland.

Its subcellular location is the secreted. Snake venom zinc metalloprotease that may activate prothrombin. The protein is Snake venom metalloproteinase AaPA of Deinagkistrodon acutus (Hundred-pace snake).